Reading from the N-terminus, the 166-residue chain is Fer3-like protein (166 aa).

The disordered stretch occupies residues 57 to 88; it reads FEEGDPEEEECEVDQGDGEEEEEEERGRGVSL. Residues 60-80 are compositionally biased toward acidic residues; that stretch reads GDPEEEECEVDQGDGEEEEEE. In terms of domain architecture, bHLH spans 101–153; that stretch reads AQRQAANIRERKRMFNLNEAFDQLRRKVPTFAYEKRLSRIETLRLAIVYISFM.

In terms of assembly, heterodimer with TCF3/E12. Interacts with the bHLH domain of TCF3/E12.

Its subcellular location is the nucleus. In terms of biological role, transcription factor that binds to the E-box and functions as inhibitor of transcription. DNA binding requires dimerization with an E protein. Inhibits transcription activation by ASCL1/MASH1 by sequestering E proteins. The chain is Fer3-like protein (FERD3L) from Homo sapiens (Human).